The sequence spans 239 residues: Peptidyl-tRNA hydrolase (239 aa).

Residue Tyr14 participates in tRNA binding. His19 (proton acceptor) is an active-site residue. Positions 64, 66, and 112 each coordinate tRNA. The tract at residues 186 to 239 is disordered; that stretch reads RTAPPRPSTGTGRPPAKTPARAEEPPAPAASPAPATAPLPDARSPLQKLVDRFK. The span at 193-204 shows a compositional bias: low complexity; that stretch reads STGTGRPPAKTP. Residues 210 to 222 show a composition bias toward pro residues; sequence PPAPAASPAPATA.

It belongs to the PTH family. Monomer.

The protein resides in the cytoplasm. The enzyme catalyses an N-acyl-L-alpha-aminoacyl-tRNA + H2O = an N-acyl-L-amino acid + a tRNA + H(+). Its function is as follows. Hydrolyzes ribosome-free peptidyl-tRNAs (with 1 or more amino acids incorporated), which drop off the ribosome during protein synthesis, or as a result of ribosome stalling. Functionally, catalyzes the release of premature peptidyl moieties from peptidyl-tRNA molecules trapped in stalled 50S ribosomal subunits, and thus maintains levels of free tRNAs and 50S ribosomes. The chain is Peptidyl-tRNA hydrolase from Ruegeria pomeroyi (strain ATCC 700808 / DSM 15171 / DSS-3) (Silicibacter pomeroyi).